A 284-amino-acid chain; its full sequence is Pantothenate synthetase (284 aa).

30–37 contributes to the ATP binding site; it reads MGNLHDGH. The active-site Proton donor is His-37. Gln-61 contacts (R)-pantoate. Gln-61 lines the beta-alanine pocket. Residue 149–152 participates in ATP binding; it reads GEKD. A (R)-pantoate-binding site is contributed by Gln-155. Residues Val-178 and 186–189 contribute to the ATP site; that span reads LSSR.

The protein belongs to the pantothenate synthetase family. In terms of assembly, homodimer.

It localises to the cytoplasm. It catalyses the reaction (R)-pantoate + beta-alanine + ATP = (R)-pantothenate + AMP + diphosphate + H(+). Its pathway is cofactor biosynthesis; (R)-pantothenate biosynthesis; (R)-pantothenate from (R)-pantoate and beta-alanine: step 1/1. Its function is as follows. Catalyzes the condensation of pantoate with beta-alanine in an ATP-dependent reaction via a pantoyl-adenylate intermediate. This chain is Pantothenate synthetase, found in Klebsiella pneumoniae (strain 342).